A 513-amino-acid polypeptide reads, in one-letter code: Maturase K (513 aa).

This sequence belongs to the intron maturase 2 family. MatK subfamily.

The protein localises to the plastid. It is found in the chloroplast. Usually encoded in the trnK tRNA gene intron. Probably assists in splicing its own and other chloroplast group II introns. In Eleusine indica (Goosegrass), this protein is Maturase K.